A 284-amino-acid polypeptide reads, in one-letter code: 2-dehydro-3-deoxyphosphooctonate aldolase (284 aa).

It belongs to the KdsA family.

Its subcellular location is the cytoplasm. It carries out the reaction D-arabinose 5-phosphate + phosphoenolpyruvate + H2O = 3-deoxy-alpha-D-manno-2-octulosonate-8-phosphate + phosphate. It participates in carbohydrate biosynthesis; 3-deoxy-D-manno-octulosonate biosynthesis; 3-deoxy-D-manno-octulosonate from D-ribulose 5-phosphate: step 2/3. It functions in the pathway bacterial outer membrane biogenesis; lipopolysaccharide biosynthesis. The chain is 2-dehydro-3-deoxyphosphooctonate aldolase from Photobacterium profundum (strain SS9).